The following is a 335-amino-acid chain: MKGLLLILASLVAIATGQDCPAYYVRSSSGASCYRYFNIRVLHRMASEFCEMVTPCGNGPSRMGALASISSPIENHEVYRMVASFSQDNQMENEAWLGWNTQSPRFWEDGTPAYPNGFAGFHQSGSYTSWPSWRPGMPTSGWPVNPANPWTPPPGRAPVMKGQHVTPQQPGQRPNLGPEWDLVEATAMRAFVCEVAAGQNIPPGQQPGFGGQQPGFGGRQPGFGGQQPGFGQQPGFGGRQPGFGGRQPGFGGQQPGFGGQQPGFGGQQPGFGGQQPGFGGQQPGFGGQQPGFGGQQPGFGGGPQRPGMGGQPNSPNPRFNRPRMLQEAETDVTGS.

The first 17 residues, M1–G17, serve as a signal peptide directing secretion. The C-type lectin domain maps to S29 to E194. Cysteines 50 and 193 form a disulfide. The disordered stretch occupies residues Q199–S335. The segment covering P207 to G310 has biased composition (gly residues). Over residues Q311–R323 the composition is skewed to low complexity.

This sequence belongs to the SM50 family. Embryo spicule.

Its subcellular location is the secreted. Major matrix protein of the sea urchin embryo spicule which directs crystal growth in certain orientations and inhibit growth in others. This Lytechinus pictus (Painted sea urchin) protein is 34 kDa spicule matrix protein.